The following is a 140-amino-acid chain: Resuscitation-promoting factor RpfC (140 aa).

Residues 1 to 31 (MTRIAKPLIKSAMAAGLVTASMSLSTAVAHA) form the signal peptide.

The protein belongs to the transglycosylase family. Rpf subfamily.

The protein localises to the secreted. In terms of biological role, factor that stimulates resuscitation of dormant cells. Has peptidoglycan (PG) hydrolytic activity. This chain is Resuscitation-promoting factor RpfC (rpfC), found in Mycobacterium tuberculosis (strain ATCC 35801 / TMC 107 / Erdman).